Here is a 556-residue protein sequence, read N- to C-terminus: Cell wall integrity and stress response component 3 (556 aa).

Residues 1–38 (MERVWFAKLTNKGTIKIGYISFILLSLLCQSLIGLVNA) form the signal peptide. The WSC domain maps to 39 to 132 (DFNYEGCYSA…SSYMNVYVNA (94 aa)). The Extracellular segment spans residues 39 to 384 (DFNYEGCYSA…QRLSGGAIAG (346 aa)). Asparagine 84 carries N-linked (GlcNAc...) asparagine glycosylation. Composition is skewed to low complexity over residues 142 to 169 (SSSK…SSTT) and 184 to 257 (TTVS…STTS). Disordered regions lie at residues 142 to 257 (SSSK…STTS) and 269 to 312 (TLSS…PSTS). 2 N-linked (GlcNAc...) asparagine glycosylation sites follow: asparagine 367 and asparagine 370. A helical transmembrane segment spans residues 385–405 (IVIGVVFGVIFIILILLFLIW). The Cytoplasmic portion of the chain corresponds to 406-556 (RRRKSHDQLD…LSSTVSHNRA (151 aa)). 2 disordered regions span residues 425-444 (YSFG…SGTT) and 534-556 (LQVV…HNRA). Residues 546–556 (ELSSTVSHNRA) are compositionally biased toward polar residues.

The protein resides in the membrane. This Saccharomyces cerevisiae (strain ATCC 204508 / S288c) (Baker's yeast) protein is Cell wall integrity and stress response component 3 (WSC3).